We begin with the raw amino-acid sequence, 81 residues long: Photosystem I iron-sulfur center (81 aa).

2 consecutive 4Fe-4S ferredoxin-type domains span residues 2-31 (SHAV…MVPW) and 39-68 (IAAS…IRVY). Residues cysteine 11, cysteine 14, cysteine 17, cysteine 21, cysteine 48, cysteine 51, cysteine 54, and cysteine 58 each coordinate [4Fe-4S] cluster.

As to quaternary structure, the cyanobacterial PSI reaction center is composed of one copy each of PsaA,B,C,D,E,F,I,J,K,L,M and X, and forms trimeric complexes. [4Fe-4S] cluster serves as cofactor.

The protein localises to the cellular thylakoid membrane. It carries out the reaction reduced [plastocyanin] + hnu + oxidized [2Fe-2S]-[ferredoxin] = oxidized [plastocyanin] + reduced [2Fe-2S]-[ferredoxin]. Its function is as follows. Apoprotein for the two 4Fe-4S centers FA and FB of photosystem I (PSI); essential for photochemical activity. FB is the terminal electron acceptor of PSI, donating electrons to ferredoxin. The C-terminus interacts with PsaA/B/D and helps assemble the protein into the PSI complex. Required for binding of PsaD and PsaE to PSI. PSI is a plastocyanin/cytochrome c6-ferredoxin oxidoreductase, converting photonic excitation into a charge separation, which transfers an electron from the donor P700 chlorophyll pair to the spectroscopically characterized acceptors A0, A1, FX, FA and FB in turn. This is Photosystem I iron-sulfur center from Prochlorococcus marinus (strain MIT 9313).